A 340-amino-acid polypeptide reads, in one-letter code: Erlin-2 (340 aa).

Over 1–3 (MAQ) the chain is Cytoplasmic. The helical transmembrane segment at 4–24 (LGAVVAVASSFFCASLFSAVH) threads the bilayer. Residues 25–340 (KIEEGHIGVY…EPLEAPTKEN (316 aa)) lie on the Lumenal side of the membrane. Residue asparagine 106 is glycosylated (N-linked (GlcNAc...) asparagine). An interaction with ERLIN1 region spans residues 177–309 (EAIRRNYELM…DIPNMFMDSA (133 aa)). Position 267 is an N6-acetyllysine (lysine 267).

Belongs to the band 7/mec-2 family. Forms a heteromeric complex with ERLIN1. In complex with ERLIN1, interacts with RNF170. Interacts with activated ITPR1, independently of the degree of ITPR1 polyubiquitination. Interacts with SCAP, INSIG1, SREBF1 and SREBF2 under cholesterol sufficiency conditions; indicative for an association with the SCAP-SREBP-INSIG complex. Probably part of an AMFR/gp78 and INSIG1-containing ubiquitin ligase complex involved in ERAD of HMGCR. Interacts with TMUB1; TMUB1 bridges the association with AMFR. Interacts with SYVN1 and RNF139. Interacts with TMEM259. Interacts with TMEM41B. In terms of processing, deubiquitinated by USP25; leading to stabilization.

The protein localises to the endoplasmic reticulum membrane. Functionally, component of the ERLIN1/ERLIN2 complex which mediates the endoplasmic reticulum-associated degradation (ERAD) of inositol 1,4,5-trisphosphate receptors (IP3Rs) such as ITPR1. Promotes sterol-accelerated ERAD of HMGCR probably implicating an AMFR/gp78-containing ubiquitin ligase complex. Involved in regulation of cellular cholesterol homeostasis by regulation the SREBP signaling pathway. May promote ER retention of the SCAP-SREBF complex. In Mus musculus (Mouse), this protein is Erlin-2 (Erlin2).